The chain runs to 498 residues: Membrane-bound lytic murein transglycosylase F (498 aa).

An N-terminal signal peptide occupies residues 1–29 (MFFKPDFRPRCAKWLIATGLFLMLGACVE). The segment at 30–267 (KPTTLERVKE…RLKDRYYGHV (238 aa)) is non-LT domain. The interval 268-498 (DVLGYVGAYT…SSSSTDESPL (231 aa)) is LT domain. The active site involves E314. A disordered region spans residues 464-498 (VADGNLHVPGVDKTQPPVPPASPVPSSSSTDESPL).

It in the N-terminal section; belongs to the bacterial solute-binding protein 3 family. The protein in the C-terminal section; belongs to the transglycosylase Slt family.

Its subcellular location is the cell outer membrane. It catalyses the reaction Exolytic cleavage of the (1-&gt;4)-beta-glycosidic linkage between N-acetylmuramic acid (MurNAc) and N-acetylglucosamine (GlcNAc) residues in peptidoglycan, from either the reducing or the non-reducing ends of the peptidoglycan chains, with concomitant formation of a 1,6-anhydrobond in the MurNAc residue.. Its function is as follows. Murein-degrading enzyme that degrades murein glycan strands and insoluble, high-molecular weight murein sacculi, with the concomitant formation of a 1,6-anhydromuramoyl product. Lytic transglycosylases (LTs) play an integral role in the metabolism of the peptidoglycan (PG) sacculus. Their lytic action creates space within the PG sacculus to allow for its expansion as well as for the insertion of various structures such as secretion systems and flagella. The polypeptide is Membrane-bound lytic murein transglycosylase F (Pseudomonas syringae pv. syringae (strain B728a)).